We begin with the raw amino-acid sequence, 389 residues long: E3 ubiquitin-protein ligase E3D (389 aa).

Alanine 2 carries the post-translational modification N-acetylalanine. The short motif at 129 to 159 is the BRAT1-like motif element; sequence PLPSENWGALVGEWCCHPDPFANKSLHPQEN. Residue cysteine 144 coordinates Zn(2+). The tract at residues 235-257 is interaction with UBE2C; the sequence is QSSERSFPIIPRSWFVQSVIAQC. The interval 353–389 is HECT-like; it reads LPSATCLELLLILSKSNANLPSSLRRVNSFQVAFLKM.

Interacts with UBE2C/UbcH10 (E2 ubiquitin-conjugating enzyme). In vitro, interacts with cyclin-B. Post-translationally, ubiquitinated by UBCH10 (E2 ubiquitin-conjugating enzyme).

The protein resides in the cytoplasm. It carries out the reaction S-ubiquitinyl-[E2 ubiquitin-conjugating enzyme]-L-cysteine + [acceptor protein]-L-lysine = [E2 ubiquitin-conjugating enzyme]-L-cysteine + N(6)-ubiquitinyl-[acceptor protein]-L-lysine.. The protein operates within protein modification; protein ubiquitination. In terms of biological role, E3 ubiquitin-protein ligase which accepts ubiquitin from specific E2 ubiquitin-conjugating enzymes, and transfers it to substrates, generally promoting their degradation by the proteasome. Independently of its E3 ubiquitin-protein ligase activity, acts as an inhibitor of CPSF3 endonuclease activity by blocking CPSF3 active site. This Homo sapiens (Human) protein is E3 ubiquitin-protein ligase E3D (UBE3D).